Here is a 95-residue protein sequence, read N- to C-terminus: Protein TusB (95 aa).

Belongs to the DsrH/TusB family. In terms of assembly, heterohexamer, formed by a dimer of trimers. The hexameric TusBCD complex contains 2 copies each of TusB, TusC and TusD. The TusBCD complex interacts with TusE.

It is found in the cytoplasm. Its function is as follows. Part of a sulfur-relay system required for 2-thiolation of 5-methylaminomethyl-2-thiouridine (mnm(5)s(2)U) at tRNA wobble positions. The sequence is that of Protein TusB from Shigella sonnei (strain Ss046).